The following is a 2628-amino-acid chain: Protein FMP27, mitochondrial (2628 aa).

The first 28 residues, methionine 1–arginine 28, serve as a signal peptide directing secretion. The segment at lysine 29 to methionine 192 is transmembrane domain. 9 LRR repeats span residues phenylalanine 160–valine 182, proline 213–glutamine 236, isoleucine 271–glutamate 296, tyrosine 306–glutamate 333, asparagine 571–asparagine 596, valine 835–histidine 857, phenylalanine 1944–phenylalanine 1967, phenylalanine 2101–lysine 2125, and isoleucine 2303–lysine 2327.

The protein localises to the cell membrane. It localises to the endoplasmic reticulum membrane. The protein resides in the mitochondrion membrane. Tube-forming lipid transport protein which binds to phosphatidylinositols and affects phosphatidylinositol-4,5-bisphosphate (PtdIns-4,5-P2) distribution. The protein is Protein FMP27, mitochondrial of Saccharomyces cerevisiae (strain ATCC 204508 / S288c) (Baker's yeast).